Here is a 471-residue protein sequence, read N- to C-terminus: Nuclear receptor subfamily 0 group B member 1 (471 aa).

3 consecutive repeat copies span residues 1–67 (MAGE…YRCC), 68–134 (FCGE…YRCC), and 135–201 (FCGE…YRCC). The tract at residues 1 to 253 (MAGEDHQWQG…QRVALKSPQV (253 aa)) is 4 X 67 AA tandem repeats. 3 short sequence motifs (LXXLL motif) span residues 13–17 (LYNML), 80–84 (LYNML), and 147–151 (LYSLL). The stretch at 202 to 253 (FCGEDHPRQSGILCNMPMSAKQTHVAPEAQPGAPWWDPSCAAQRVALKSPQV) is one 4; truncated repeat. The 261-residue stretch at 210 to 470 (QSGILCNMPM…DMMLEMLCAK (261 aa)) folds into the NR LBD domain. An AF-2 motif motif is present at residues 462 to 467 (MMLEML).

It belongs to the nuclear hormone receptor family. NR0 subfamily. Homodimer. Interacts with NR5A1, NR5A2, NR0B2 and with COPS2. Interacts with ESRRB; represses ESRRB activity at the GATA6 promoter.

The protein localises to the nucleus. Its subcellular location is the cytoplasm. In terms of biological role, nuclear receptor that lacks a DNA-binding domain and acts as a corepressor that inhibits the transcriptional activity of other nuclear receptors through heterodimeric interactions. Component of a cascade required for the development of the hypothalamic-pituitary-adrenal-gonadal axis. May also have a role in the development of the embryo and in the maintenance of embryonic stem cell pluripotency. In Sus scrofa (Pig), this protein is Nuclear receptor subfamily 0 group B member 1 (NR0B1).